The sequence spans 340 residues: Glycerol-3-phosphate dehydrogenase [NAD(P)+] (340 aa).

The NADPH site is built by S14, F15, R35, and K108. The sn-glycerol 3-phosphate site is built by K108 and G136. A140 contacts NADPH. 5 residues coordinate sn-glycerol 3-phosphate: K191, D244, S254, R255, and N256. The active-site Proton acceptor is the K191. R255 is an NADPH binding site. Positions 279 and 281 each coordinate NADPH.

Belongs to the NAD-dependent glycerol-3-phosphate dehydrogenase family.

The protein localises to the cytoplasm. The enzyme catalyses sn-glycerol 3-phosphate + NAD(+) = dihydroxyacetone phosphate + NADH + H(+). It carries out the reaction sn-glycerol 3-phosphate + NADP(+) = dihydroxyacetone phosphate + NADPH + H(+). The protein operates within membrane lipid metabolism; glycerophospholipid metabolism. Its function is as follows. Catalyzes the reduction of the glycolytic intermediate dihydroxyacetone phosphate (DHAP) to sn-glycerol 3-phosphate (G3P), the key precursor for phospholipid synthesis. This is Glycerol-3-phosphate dehydrogenase [NAD(P)+] from Azotobacter vinelandii (strain DJ / ATCC BAA-1303).